The sequence spans 168 residues: G/U mismatch-specific DNA glycosylase (168 aa).

The protein belongs to the uracil-DNA glycosylase (UDG) superfamily. TDG/mug family. In terms of assembly, binds DNA as a monomer.

It is found in the cytoplasm. It catalyses the reaction Specifically hydrolyzes mismatched double-stranded DNA and polynucleotides, releasing free uracil.. Its function is as follows. Excises ethenocytosine and uracil, which can arise by alkylation or deamination of cytosine, respectively, from the corresponding mispairs with guanine in ds-DNA. It is capable of hydrolyzing the carbon-nitrogen bond between the sugar-phosphate backbone of the DNA and the mispaired base. The complementary strand guanine functions in substrate recognition. Required for DNA damage lesion repair in stationary-phase cells. This chain is G/U mismatch-specific DNA glycosylase, found in Salmonella paratyphi B (strain ATCC BAA-1250 / SPB7).